A 388-amino-acid polypeptide reads, in one-letter code: Xylose isomerase (388 aa).

Residues His-54 and Asp-57 contribute to the active site. Glu-181, Glu-217, His-220, Asp-245, Asp-255, Asp-257, and Asp-287 together coordinate Mg(2+).

The protein belongs to the xylose isomerase family. As to quaternary structure, homotetramer. The cofactor is Mg(2+).

It is found in the cytoplasm. It carries out the reaction alpha-D-xylose = alpha-D-xylulofuranose. In terms of biological role, involved in D-xylose catabolism. The chain is Xylose isomerase (xylA) from Streptomyces murinus.